The following is a 336-amino-acid chain: Abasic site processing protein HMCES (336 aa).

C2 (nucleophile) is an active-site residue. A Thiazolidine linkage to a ring-opened DNA abasic site modification is found at C2. Over residues 29 to 38 the composition is skewed to basic and acidic residues; the sequence is QPEWLREGRY. The disordered stretch occupies residues 29-52; sequence QPEWLREGRYRPSYNKGPQSSGPV. E127 is a catalytic residue. Positions 283 to 336 are disordered; it reads LKSSQEGSPQKKEDTLPRWKSQFIHSPSPKKSSAGILRQWLGQEGGPPAKKQKA.

It belongs to the SOS response-associated peptidase family.

It localises to the chromosome. Formation and reversal of DNA-protein cross-link depends on DNA context. Catalyzes formation of the thiazolidine linkage in presence of abasic sites in single-stranded DNA. Mediates the reversal of the thiazolidine cross-link in presence of double stranded DNA. Sensor of abasic sites in single-stranded DNA (ssDNA) required to preserve genome integrity by promoting error-free repair of abasic sites. Acts as an enzyme that recognizes and binds abasic sites in ssDNA at replication forks and chemically modifies the lesion by forming a covalent cross-link with DNA: forms a stable thiazolidine linkage between a ring-opened abasic site and the alpha-amino and sulfhydryl substituents of its N-terminal catalytic cysteine residue. The HMCES DNA-protein cross-link is then either reversed or degraded. HMCES is able to catalyze the reversal of its thiazolidine cross-link and cycle between a cross-link and a non-cross-linked state depending on DNA context: mediates self-reversal of the thiazolidine cross-link in double stranded DNA, allowing APEX1 to initiate downstream repair of abasic sites. The HMCES DNA-protein cross-link can also be degraded by the SPRTN metalloprotease following unfolding by the BRIP1/FANCJ helicase. Promotes error-free repair of abasic sites by protecting abasic sites from translesion synthesis (TLS) polymerases and endonucleases that are error-prone and would generate mutations and double-strand breaks. Acts as a protease: mediates autocatalytic processing of its N-terminal methionine in order to expose the catalytic cysteine. The HMCES DNA-protein cross-link is then either reversed or degraded. According to a model, the HMCES DNA-protein cross-link. This is Abasic site processing protein HMCES from Gallus gallus (Chicken).